The sequence spans 340 residues: Glycerol-3-phosphate dehydrogenase [NAD(P)+] (340 aa).

Residues Ser14, Phe15, Arg35, and Lys108 each contribute to the NADPH site. Sn-glycerol 3-phosphate is bound by residues Lys108 and Gly136. Ala140 contacts NADPH. Sn-glycerol 3-phosphate-binding residues include Lys191, Asp244, Ser254, Arg255, and Asn256. The Proton acceptor role is filled by Lys191. Position 255 (Arg255) interacts with NADPH. Glu281 serves as a coordination point for NADPH.

It belongs to the NAD-dependent glycerol-3-phosphate dehydrogenase family.

It is found in the cytoplasm. It catalyses the reaction sn-glycerol 3-phosphate + NAD(+) = dihydroxyacetone phosphate + NADH + H(+). The enzyme catalyses sn-glycerol 3-phosphate + NADP(+) = dihydroxyacetone phosphate + NADPH + H(+). Its pathway is membrane lipid metabolism; glycerophospholipid metabolism. Catalyzes the reduction of the glycolytic intermediate dihydroxyacetone phosphate (DHAP) to sn-glycerol 3-phosphate (G3P), the key precursor for phospholipid synthesis. This is Glycerol-3-phosphate dehydrogenase [NAD(P)+] from Pseudomonas aeruginosa (strain LESB58).